Consider the following 431-residue polypeptide: Female gametocyte surface protein P47 (431 aa).

The first 20 residues, 1-20 (MKGFTGASIIVFYLIKGYLS), serve as a signal peptide directing secretion. A 6-Cys 1 domain is found at 26 to 178 (NGYVCDFKFN…GLVKIILNNQ (153 aa)). Disulfide bonds link C30/C55, C70/C145, and C88/C143. The N-linked (GlcNAc...) asparagine glycan is linked to N45. An N-linked (GlcNAc...) asparagine glycan is attached at N239. Residues 278-413 (NIDGCDFTVP…MELKISSSKN (136 aa)) enclose the 6-Cys 2 domain. Intrachain disulfides connect C282-C309, C326-C395, and C335-C393. S409 carries the GPI-anchor amidated serine lipid modification. The propeptide at 410–431 (SSKNIFISFILLSIIVSIFYLF) is removed in mature form.

It localises to the cell surface. The protein resides in the cell membrane. Required for female fertility. This Plasmodium berghei (strain Anka) protein is Female gametocyte surface protein P47 (PB47).